The sequence spans 334 residues: Thioredoxin reductase (334 aa).

FAD is bound by residues 10-13 (SGPA), 39-40 (IA), glutamine 44, asparagine 53, valine 86, cysteine 143, aspartate 287, and 294-296 (RQA). Cysteine 140 and cysteine 143 form a disulfide bridge.

It belongs to the class-II pyridine nucleotide-disulfide oxidoreductase family. In terms of assembly, homodimer. The cofactor is FAD.

It localises to the cytoplasm. It carries out the reaction [thioredoxin]-dithiol + NADP(+) = [thioredoxin]-disulfide + NADPH + H(+). In Neurospora crassa (strain ATCC 24698 / 74-OR23-1A / CBS 708.71 / DSM 1257 / FGSC 987), this protein is Thioredoxin reductase (cys-9).